The primary structure comprises 121 residues: ATP synthase epsilon chain (121 aa).

Belongs to the ATPase epsilon chain family. F-type ATPases have 2 components, CF(1) - the catalytic core - and CF(0) - the membrane proton channel. CF(1) has five subunits: alpha(3), beta(3), gamma(1), delta(1), epsilon(1). CF(0) has three main subunits: a, b and c.

The protein localises to the cell membrane. Produces ATP from ADP in the presence of a proton gradient across the membrane. The polypeptide is ATP synthase epsilon chain (Mycobacterium leprae (strain Br4923)).